The primary structure comprises 1054 residues: Translation initiation factor IF-2 (1054 aa).

Disordered regions lie at residues Asp57–Cys213, Asp225–Asp248, Ser287–Gln315, and Asp401–Leu436. Positions Gln92–Pro104 are enriched in polar residues. Low complexity predominate over residues Glu111–Cys213. Residues Asp401 to Lys418 are compositionally biased toward basic and acidic residues. Positions Thr552–Thr721 constitute a tr-type G domain. The interval Gly561–Thr568 is G1. Gly561–Thr568 contributes to the GTP binding site. The tract at residues Gly586–His590 is G2. A G3 region spans residues Asp607–Gly610. GTP is bound by residues Asp607 to His611 and Asn661 to Asp664. Residues Asn661–Asp664 form a G4 region. Residues Ser697–Lys699 form a G5 region.

The protein belongs to the TRAFAC class translation factor GTPase superfamily. Classic translation factor GTPase family. IF-2 subfamily.

It localises to the cytoplasm. In terms of biological role, one of the essential components for the initiation of protein synthesis. Protects formylmethionyl-tRNA from spontaneous hydrolysis and promotes its binding to the 30S ribosomal subunits. Also involved in the hydrolysis of GTP during the formation of the 70S ribosomal complex. In Stigmatella aurantiaca, this protein is Translation initiation factor IF-2 (infB).